Consider the following 562-residue polypeptide: Arginine--tRNA ligase (562 aa).

Positions 122-132 (PNIAKPISMGH) match the 'HIGH' region motif.

It belongs to the class-I aminoacyl-tRNA synthetase family. As to quaternary structure, monomer.

It is found in the cytoplasm. It carries out the reaction tRNA(Arg) + L-arginine + ATP = L-arginyl-tRNA(Arg) + AMP + diphosphate. The sequence is that of Arginine--tRNA ligase from Pediococcus pentosaceus (strain ATCC 25745 / CCUG 21536 / LMG 10740 / 183-1w).